Here is a 679-residue protein sequence, read N- to C-terminus: Genome polyprotein (679 aa).

The propeptide at 1–14 (SAGMIIMLIPTVMA) is ER anchor for the capsid protein C, removed in mature form by serine protease NS3. Residues 2–22 (AGMIIMLIPTVMAFHLTTRNG) traverse the membrane as a helical segment. Topologically, residues 23-138 (EPHMIVSRQE…GAWKHAQRIE (116 aa)) are extracellular. Asn83 is a glycosylation site (N-linked (GlcNAc...) asparagine; by host). A helical transmembrane segment spans residues 139–159 (IWILRHPGFTIMAAILAYTIG). Topologically, residues 160–165 (TTHFQR) are cytoplasmic. The helical transmembrane segment at 166–180 (ALIFILLTAVAPSMT) threads the bilayer. Over 181–625 (MRCIGISNRD…LHQVFGAIYG (445 aa)) the chain is Extracellular. Intrachain disulfides connect Cys183–Cys210, Cys240–Cys301, Cys254–Cys285, and Cys272–Cys296. A glycan (N-linked (GlcNAc...) asparagine; by host) is linked at Asn247. The interval 278-291 (DRGWGNGCGLFGKG) is fusion peptide. Asn333 is a glycosylation site (N-linked (GlcNAc...) asparagine; by host). Disulfide bonds link Cys365/Cys465 and Cys482/Cys513. The helical transmembrane segment at 626 to 646 (AAFSGVSWTMKILIGVIITWI) threads the bilayer. At 647–652 (GMNSRS) the chain is on the cytoplasmic side. A helical transmembrane segment spans residues 653–673 (TSLSVSLVLVGIVTLYLGVMV). Residues 674 to 679 (QADSGC) lie on the Extracellular side of the membrane.

In terms of assembly, forms heterodimers with envelope protein E in the endoplasmic reticulum and Golgi. Homodimer; in the endoplasmic reticulum and Golgi. Interacts with protein prM. Interacts with non-structural protein 1. In terms of processing, cleaved in post-Golgi vesicles by a host furin, releasing the mature small envelope protein M, and peptide pr. This cleavage is incomplete as up to 30% of viral particles still carry uncleaved prM. Post-translationally, N-glycosylated. N-glycosylated. The excreted form is glycosylated and this is required for efficient secretion of the protein from infected cells. In terms of processing, specific enzymatic cleavages in vivo yield mature proteins. Cleavages in the lumen of endoplasmic reticulum are performed by host signal peptidase, wereas cleavages in the cytoplasmic side are performed by serine protease NS3. Signal cleavage at the 2K-4B site requires a prior NS3 protease-mediated cleavage at the 4A-2K site.

The protein resides in the secreted. It is found in the virion membrane. It localises to the host endoplasmic reticulum membrane. Prevents premature fusion activity of envelope proteins in trans-Golgi by binding to envelope protein E at pH6.0. After virion release in extracellular space, gets dissociated from E dimers. In terms of biological role, acts as a chaperone for envelope protein E during intracellular virion assembly by masking and inactivating envelope protein E fusion peptide. prM is the only viral peptide matured by host furin in the trans-Golgi network probably to avoid catastrophic activation of the viral fusion activity in acidic Golgi compartment prior to virion release. prM-E cleavage is inefficient, and many virions are only partially matured. These uncleaved prM would play a role in immune evasion. Its function is as follows. May play a role in virus budding. Exerts cytotoxic effects by activating a mitochondrial apoptotic pathway through M ectodomain. May display a viroporin activity. Functionally, binds to host cell surface receptor and mediates fusion between viral and cellular membranes. Envelope protein is synthesized in the endoplasmic reticulum in the form of heterodimer with protein prM. They play a role in virion budding in the ER, and the newly formed immature particle is covered with 60 spikes composed of heterodimer between precursor prM and envelope protein E. The virion is transported to the Golgi apparatus where the low pH causes dissociation of PrM-E heterodimers and formation of E homodimers. prM-E cleavage is inefficient, and many virions are only partially matured. These uncleaved prM would play a role in immune evasion. Involved in immune evasion, pathogenesis and viral replication. Once cleaved off the polyprotein, is targeted to three destinations: the viral replication cycle, the plasma membrane and the extracellular compartment. Essential for viral replication. Required for formation of the replication complex and recruitment of other non-structural proteins to the ER-derived membrane structures. Excreted as a hexameric lipoparticle that plays a role against host immune response. Antagonizing the complement function. Binds to the host macrophages and dendritic cells. Inhibits signal transduction originating from Toll-like receptor 3 (TLR3). In terms of biological role, disrupts the host endothelial glycocalyx layer of host pulmonary microvascular endothelial cells, inducing degradation of sialic acid and shedding of heparan sulfate proteoglycans. NS1 induces expression of sialidases, heparanase, and activates cathepsin L, which activates heparanase via enzymatic cleavage. These effects are probably linked to the endothelial hyperpermeability observed in severe dengue disease. This is Genome polyprotein from Dengue virus type 2 (strain Thailand/PUO-218/1980) (DENV-2).